The sequence spans 491 residues: uncharacterized protein (491 aa).

Transmembrane regions (helical) follow at residues 48 to 68 (LILV…VAPC), 85 to 105 (ALIL…SAPL), 112 to 132 (RMLL…CGLA), 140 to 160 (IFRF…SGTI), 174 to 194 (AVMS…SGFI), 202 to 222 (WIFW…LPLL), 277 to 297 (PIVI…YLVL), 317 to 337 (LNYI…GIFI), 358 to 378 (VPVI…YGWT), 383 to 403 (THWI…MLGW), 408 to 428 (TYLI…ACCV), and 455 to 475 (LLAF…WFGG).

The protein belongs to the major facilitator superfamily.

It is found in the membrane. This is an uncharacterized protein from Schizosaccharomyces pombe (strain 972 / ATCC 24843) (Fission yeast).